A 51-amino-acid polypeptide reads, in one-letter code: UPF0337 protein NE0131 (51 aa).

It belongs to the UPF0337 (CsbD) family.

The sequence is that of UPF0337 protein NE0131 from Nitrosomonas europaea (strain ATCC 19718 / CIP 103999 / KCTC 2705 / NBRC 14298).